The following is a 421-amino-acid chain: Testin (421 aa).

In terms of domain architecture, PET spans 92-199; sequence MILTNPVAAK…GDVKLPREMD (108 aa). Residues 133 to 164 are disordered; that stretch reads EKQPVAGSEGAQYRKKQLAKQLPAHDQDPSKC. Basic and acidic residues predominate over residues 155–164; the sequence is PAHDQDPSKC. LIM zinc-binding domains are found at residues 234-297, 299-359, and 362-421; these read YSCY…CDSE, PRCA…NHAV, and QGCH…KMMS.

This sequence belongs to the prickle / espinas / testin family. As to quaternary structure, interacts via LIM domain 1 with ZYX. Interacts (via LIM domain 3) with ENAH and VASP. Interacts with ALKBH4, talin, actin, alpha-actinin, GRIP1 and PXN. Interacts (via LIM domain 2) with ACTL7A (via N-terminus). Heterodimer with ACTL7A; the heterodimer interacts with ENAH to form a heterotrimer.

Its subcellular location is the cytoplasm. It is found in the cell junction. The protein localises to the focal adhesion. In terms of biological role, scaffold protein that may play a role in cell adhesion, cell spreading and in the reorganization of the actin cytoskeleton. Plays a role in the regulation of cell proliferation. May act as a tumor suppressor. This Canis lupus familiaris (Dog) protein is Testin (TES).